We begin with the raw amino-acid sequence, 403 residues long: Phosphoglycerate kinase (403 aa).

Substrate is bound by residues aspartate 21 to asparagine 23, arginine 36, histidine 59 to arginine 62, arginine 119, and arginine 159. Residues lysine 214, glycine 301, glutamate 332, and glycine 359 to serine 362 each bind ATP.

The protein belongs to the phosphoglycerate kinase family. In terms of assembly, monomer.

Its subcellular location is the cytoplasm. The catalysed reaction is (2R)-3-phosphoglycerate + ATP = (2R)-3-phospho-glyceroyl phosphate + ADP. The protein operates within carbohydrate degradation; glycolysis; pyruvate from D-glyceraldehyde 3-phosphate: step 2/5. This Lactobacillus gasseri (strain ATCC 33323 / DSM 20243 / BCRC 14619 / CIP 102991 / JCM 1131 / KCTC 3163 / NCIMB 11718 / NCTC 13722 / AM63) protein is Phosphoglycerate kinase.